Here is a 339-residue protein sequence, read N- to C-terminus: Ornithine utilization regulator (339 aa).

One can recognise an HTH araC/xylS-type domain in the interval 241–338 (TRVRRLLLAR…GKLPSDYREA (98 aa)). 2 consecutive DNA-binding regions (H-T-H motif) follow at residues 258–279 (EQAARELHTSGRSLRRHLSSLG) and 305–328 (LYEIALLLGFNDSSNFRRAFRKWT).

Its function is as follows. Probably activates the ArgJ gene that encodes ornithine acetyltransferase. Binds to its own promoter-operator region. Probably binds ornithine. This chain is Ornithine utilization regulator (oruR), found in Pseudomonas aeruginosa (strain ATCC 15692 / DSM 22644 / CIP 104116 / JCM 14847 / LMG 12228 / 1C / PRS 101 / PAO1).